We begin with the raw amino-acid sequence, 396 residues long: Microcin B17-processing protein McbD (396 aa).

Residues 41 to 396 enclose the YcaO domain; that stretch reads ASAAGETLKS…VRESKMVPFP (356 aa).

Its subcellular location is the cytoplasm. Necessary to process the inactive microcin B17 (McbA) precursor into the active peptide. The protein is Microcin B17-processing protein McbD (mcbD) of Escherichia coli.